Reading from the N-terminus, the 248-residue chain is Ribonuclease PH (248 aa).

Phosphate contacts are provided by residues Arg86 and Gly124 to Arg126.

The protein belongs to the RNase PH family. Homohexameric ring arranged as a trimer of dimers.

The catalysed reaction is tRNA(n+1) + phosphate = tRNA(n) + a ribonucleoside 5'-diphosphate. Its function is as follows. Phosphorolytic 3'-5' exoribonuclease that plays an important role in tRNA 3'-end maturation. Removes nucleotide residues following the 3'-CCA terminus of tRNAs; can also add nucleotides to the ends of RNA molecules by using nucleoside diphosphates as substrates, but this may not be physiologically important. Probably plays a role in initiation of 16S rRNA degradation (leading to ribosome degradation) during starvation. The sequence is that of Ribonuclease PH from Listeria monocytogenes serotype 4b (strain CLIP80459).